Consider the following 25-residue polypeptide: Caerin 2.1 (25 aa).

Expressed by the skin dorsal glands.

The protein localises to the secreted. Functionally, antibacterial peptide with narrow spectrum of activity. Active against the Gram-negative bacterium P.multocida (MIC=25 ug/ml). Inhibits the formation of NO by neuronal nitric oxide synthase with an IC(50) of 9 ug/ml. This is Caerin 2.1 from Litoria peronii (Emerald spotted tree frog).